A 358-amino-acid chain; its full sequence is 3-dehydroquinate synthase (358 aa).

NAD(+) is bound by residues 105–109 (GVVGD), 129–130 (TT), Lys142, Lys151, and 169–172 (TLKT). Zn(2+)-binding residues include Glu184, His245, and His262.

This sequence belongs to the sugar phosphate cyclases superfamily. Dehydroquinate synthase family. NAD(+) serves as cofactor. It depends on Co(2+) as a cofactor. The cofactor is Zn(2+).

The protein localises to the cytoplasm. It catalyses the reaction 7-phospho-2-dehydro-3-deoxy-D-arabino-heptonate = 3-dehydroquinate + phosphate. The protein operates within metabolic intermediate biosynthesis; chorismate biosynthesis; chorismate from D-erythrose 4-phosphate and phosphoenolpyruvate: step 2/7. In terms of biological role, catalyzes the conversion of 3-deoxy-D-arabino-heptulosonate 7-phosphate (DAHP) to dehydroquinate (DHQ). This Enterococcus faecalis (strain ATCC 47077 / OG1RF) protein is 3-dehydroquinate synthase.